Here is a 421-residue protein sequence, read N- to C-terminus: Glutamyl-tRNA reductase (421 aa).

Substrate is bound by residues 49 to 52, Ser-109, 114 to 116, and Gln-120; these read TCNR and EPQ. Cys-50 (nucleophile) is an active-site residue. Position 189 to 194 (189 to 194) interacts with NADP(+); sequence GAGKMS.

Belongs to the glutamyl-tRNA reductase family. In terms of assembly, homodimer.

It carries out the reaction (S)-4-amino-5-oxopentanoate + tRNA(Glu) + NADP(+) = L-glutamyl-tRNA(Glu) + NADPH + H(+). It functions in the pathway porphyrin-containing compound metabolism; protoporphyrin-IX biosynthesis; 5-aminolevulinate from L-glutamyl-tRNA(Glu): step 1/2. Functionally, catalyzes the NADPH-dependent reduction of glutamyl-tRNA(Glu) to glutamate 1-semialdehyde (GSA). The polypeptide is Glutamyl-tRNA reductase (Solibacter usitatus (strain Ellin6076)).